A 177-amino-acid polypeptide reads, in one-letter code: MKKILNLLPIFTFFIFYRFYDIFIASKSLIFISGLTCLLYWIIYKEIDKINLFSFITIAIFGSLTIIFHNSQFIKWKITIIYMIFSVILFISQFFMKKPIIQRFLEKDIKISDLYWKKINFFWALFFLFCSILNIYVALCLPEKIWVNFKVFGLSFLMFLSILITSIYINFKMLKEK.

Helical transmembrane passes span 22–42, 50–70, 76–96, 121–141, and 151–171; these read IFIA…LYWI, INLF…IFHN, WKIT…QFFM, FFWA…ALCL, and VFGL…YINF.

This sequence belongs to the YciB family.

It localises to the cell inner membrane. Its function is as follows. Plays a role in cell envelope biogenesis, maintenance of cell envelope integrity and membrane homeostasis. This chain is Inner membrane-spanning protein YciB, found in Buchnera aphidicola subsp. Schizaphis graminum (strain Sg).